We begin with the raw amino-acid sequence, 64 residues long: Copper-metallothionein (64 aa).

S1 is subject to N-acetylserine. Residues C7, C11, C16, C18, C22, C24, C28, C30, C33, C36, C38, C43, C45, C49, C55, C57, C61, and C63 each contribute to the Cu(+) site.

This sequence belongs to the metallothionein superfamily. Type 2 family.

The metallothioneins are involved in the cellular sequestration of toxic metal ions and regulation of essential trace elements. This isoform binds exclusively copper. The sequence is that of Copper-metallothionein from Helix pomatia (Roman snail).